A 477-amino-acid chain; its full sequence is Ribulose bisphosphate carboxylase large chain (477 aa).

The propeptide occupies 1–2 (MS). P3 carries the N-acetylproline modification. Residue K14 is modified to N6,N6,N6-trimethyllysine. Residues N123 and T173 each contribute to the substrate site. K175 (proton acceptor) is an active-site residue. K177 is a binding site for substrate. Positions 201, 203, and 204 each coordinate Mg(2+). The residue at position 201 (K201) is an N6-carboxylysine. Residue H294 is the Proton acceptor of the active site. Positions 295, 327, and 379 each coordinate substrate.

This sequence belongs to the RuBisCO large chain family. Type I subfamily. In terms of assembly, heterohexadecamer of 8 large chains and 8 small chains; disulfide-linked. The disulfide link is formed within the large subunit homodimers. The cofactor is Mg(2+). The disulfide bond which can form in the large chain dimeric partners within the hexadecamer appears to be associated with oxidative stress and protein turnover.

It is found in the plastid. Its subcellular location is the chloroplast. The catalysed reaction is 2 (2R)-3-phosphoglycerate + 2 H(+) = D-ribulose 1,5-bisphosphate + CO2 + H2O. It carries out the reaction D-ribulose 1,5-bisphosphate + O2 = 2-phosphoglycolate + (2R)-3-phosphoglycerate + 2 H(+). Its function is as follows. RuBisCO catalyzes two reactions: the carboxylation of D-ribulose 1,5-bisphosphate, the primary event in carbon dioxide fixation, as well as the oxidative fragmentation of the pentose substrate in the photorespiration process. Both reactions occur simultaneously and in competition at the same active site. The polypeptide is Ribulose bisphosphate carboxylase large chain (Nicotiana tomentosiformis (Tobacco)).